Reading from the N-terminus, the 176-residue chain is Nucleoside triphosphate/diphosphate phosphatase (176 aa).

Residue arginine 23 is the Proton donor of the active site. Residues asparagine 87, aspartate 103, aspartate 105, aspartate 107, aspartate 120, and glutamate 123 each coordinate Mg(2+).

This sequence belongs to the Ntdp family. Mg(2+) serves as cofactor.

The catalysed reaction is a ribonucleoside 5'-triphosphate + H2O = a ribonucleoside 5'-diphosphate + phosphate + H(+). It carries out the reaction a ribonucleoside 5'-diphosphate + H2O = a ribonucleoside 5'-phosphate + phosphate + H(+). Has nucleoside phosphatase activity towards nucleoside triphosphates and nucleoside diphosphates. The polypeptide is Nucleoside triphosphate/diphosphate phosphatase (yjjG) (Lactococcus lactis subsp. lactis (strain IL1403) (Streptococcus lactis)).